An 89-amino-acid chain; its full sequence is Small ribosomal subunit protein bS16 (89 aa).

Belongs to the bacterial ribosomal protein bS16 family.

In Chloroflexus aurantiacus (strain ATCC 29364 / DSM 637 / Y-400-fl), this protein is Small ribosomal subunit protein bS16.